A 424-amino-acid polypeptide reads, in one-letter code: Sulfatase ppz1 (424 aa).

Ca(2+)-binding residues include Asp13, Asp203, and Asn204.

This sequence belongs to the sulfatase family. The cofactor is Ca(2+).

Functionally, sulfatase; part of the gene cluster that mediates the biosynthesis of pyrrolopyrazines, secondary metabolites showing insecticidal activity. The role of ppz1 within the pathway has still to be determined. The single multifunctional NRPS ppzA is sufficient to produce peramine via condensation of 1-pyrroline-5-carboxylate and arginine, N-methylation of the alpha-amino group of arginine and reduction of the thioester and the cyclization to form an iminium ion resulting in release from the peptide synthetase. Deprotonation of this intermediate and oxidation of the pyrroline ring would give rise to peramine. In Epichloe species that produce only peramine, the peramine synthetase gene is not localized in a gene cluster, in contrast to Metarhizium species that contain additional pyrrolopyrazine biosynthesis genes. The 2-oxoglutarate-Fe(II) type oxidoreductase ppzC hydroxylates peramine to yield the newly identified compound 8-hydroxyperamine whereas ppzD converts L-proline into trans-4-hydroxy-L-proline, a precursor of peramine biosynthesis. The protein is Sulfatase ppz1 of Metarhizium majus (strain ARSEF 297).